The chain runs to 342 residues: Galactose mutarotase (342 aa).

Residue Ala-2 is modified to N-acetylalanine. Residue Ser-14 is modified to Phosphoserine. Beta-D-galactose-binding positions include 81 to 82 (NR) and His-107. At Ser-124 the chain carries Phosphoserine. His-176 (proton donor) is an active-site residue. Beta-D-galactose is bound by residues 176–178 (HSY), Asp-243, Gln-279, and Glu-307. The active-site Proton acceptor is Glu-307.

Belongs to the aldose epimerase family. In terms of assembly, monomer.

It localises to the cytoplasm. It catalyses the reaction alpha-D-galactose = beta-D-galactose. The catalysed reaction is alpha-D-glucose = beta-D-glucose. Its pathway is carbohydrate metabolism; hexose metabolism. It functions in the pathway carbohydrate metabolism; galactose metabolism. In terms of biological role, mutarotase that catalyzes the interconversion of beta-D-galactose and alpha-D-galactose during galactose metabolism. Beta-D-galactose is metabolized in the liver into glucose 1-phosphate, the primary metabolic fuel, by the action of four enzymes that constitute the Leloir pathway: GALM, GALK1 (galactokinase), GALT (galactose-1-phosphate uridylyltransferase) and GALE (UDP-galactose-4'-epimerase). Involved in the maintenance of the equilibrium between the beta- and alpha-anomers of galactose, therefore ensuring a sufficient supply of the alpha-anomer for GALK1. Also active on D-glucose although shows a preference for galactose over glucose. The chain is Galactose mutarotase (GALM) from Pongo abelii (Sumatran orangutan).